Consider the following 419-residue polypeptide: DNA ligase (419 aa).

An NTD region spans residues 1 to 120; sequence MLSQFPGQCS…ARQKRGAHTN (120 aa). Residues 121-317 form an AD domain region; it reads RGMIPPMLVK…NYHSPHLAKL (197 aa). Residues His149, Lys151, Glu203, and Phe232 each coordinate ATP. The active-site N6-AMP-lysine intermediate is Lys151. Glu203 provides a ligand contact to a divalent metal cation. Glu291 contacts a divalent metal cation. ATP contacts are provided by Ile294 and Lys316. Positions 318–419 are OB domain; it reads KPLLDAEFIL…REPINVLEII (102 aa).

It belongs to the ATP-dependent DNA ligase family. The cofactor is a divalent metal cation.

It is found in the virion. It carries out the reaction ATP + (deoxyribonucleotide)n-3'-hydroxyl + 5'-phospho-(deoxyribonucleotide)m = (deoxyribonucleotide)n+m + AMP + diphosphate.. Functionally, very low-fidelity DNA ligase that seals nicks in double-stranded DNA during DNA repair. Together with the viral repair DNA polymerase X, fills the single nucleotide gaps generated by the AP endonuclease. It is not essential for viral replication and recombination. Displays a very low adenylation activity towards DNA with 3'-dideoxy- or 3'-amino-terminated nicks compared to regular nick DNA. The protein is DNA ligase (LIG) of Ornithodoros (relapsing fever ticks).